The sequence spans 204 residues: Adenylyl-sulfate kinase (204 aa).

34 to 41 (GLSGSGKS) serves as a coordination point for ATP. Residue serine 108 is the Phosphoserine intermediate of the active site.

Belongs to the APS kinase family.

It catalyses the reaction adenosine 5'-phosphosulfate + ATP = 3'-phosphoadenylyl sulfate + ADP + H(+). The protein operates within sulfur metabolism; hydrogen sulfide biosynthesis; sulfite from sulfate: step 2/3. In terms of biological role, catalyzes the synthesis of activated sulfate. This is Adenylyl-sulfate kinase from Phocaeicola vulgatus (strain ATCC 8482 / DSM 1447 / JCM 5826 / CCUG 4940 / NBRC 14291 / NCTC 11154) (Bacteroides vulgatus).